We begin with the raw amino-acid sequence, 563 residues long: MKTLLIIDANLGQARAYMAKTLLGAAARKAKLEIIDNPNDAEMAIVLGDSIPNDSALNGKNVWLGDISRAVAHPELFLSEAKGHAKPYTAPVAATAPVAASGPKRVVAVTACPTGVAHTFMAAEAIETEAKKRGWWVKVETRGSVGAGNAITPEEVAAADLVIVAADIEVDLAKFAGKPMYRTSTGLALKKTAQELDKAVAEATPYEPAGKAQTATTESKKESAGAYRHLLTGVSYMLPMVVAGGLCIALSFAFGIEAFKEPGTLAAALMQIGGGSAFALMVPVLAGYIAFSIADRPGLTPGLIGGMLAVSTGSGFIGGIIAGFLAGYIAKLISTQLKLPQSMEALKPILIIPLISSLVVGLAMIYLIGKPVAGILEGLTHWLQTMGTANAVLLGAILGGMMCTDMGGPVNKAAYAFGVGLLSTQTYGPMAAIMAAGMVPPLAMGLATMVARRKFDKAQQEGGKAALVLGLCFISEGAIPFAARDPMRVLPCCIVGGALTGAISMAIGAKLMAPHGGLFVLLIPGAITPVLGYLVAIIAGTLVAGLAYAFLKRPEVDAVAKAA.

2 consecutive PTS EIIB type-2 domains span residues Met1 to Ala85 and Lys104 to Ala201. Residue Cys112 is the Phosphocysteine intermediate; for EIIB activity of the active site. Position 112 is a phosphocysteine; by EIIA (Cys112). Residues Ala226–Lys561 enclose the PTS EIIC type-2 domain. 9 consecutive transmembrane segments (helical) span residues Tyr236–Ile256, Gly274–Ala294, Ile304–Phe324, Ile349–Gly369, Trp382–Met402, Met430–Val450, Gly463–Ala483, Val489–Ala509, and Leu518–Ile538.

The protein localises to the cell inner membrane. It carries out the reaction D-fructose(out) + N(pros)-phospho-L-histidyl-[protein] = D-fructose 1-phosphate(in) + L-histidyl-[protein]. The phosphoenolpyruvate-dependent sugar phosphotransferase system (sugar PTS), a major carbohydrate active transport system, catalyzes the phosphorylation of incoming sugar substrates concomitantly with their translocation across the cell membrane. The enzyme II FruAB PTS system is involved in fructose transport. The sequence is that of PTS system fructose-specific EIIB'BC component from Escherichia coli (strain K12).